A 91-amino-acid polypeptide reads, in one-letter code: uncharacterized protein (91 aa).

A helical membrane pass occupies residues 7–23; the sequence is IALVGVVVVLFGALRYQ.

The protein localises to the membrane. This is an uncharacterized protein from Haemophilus influenzae (strain ATCC 51907 / DSM 11121 / KW20 / Rd).